Consider the following 232-residue polypeptide: Thiamine import ATP-binding protein ThiQ (232 aa).

In terms of domain architecture, ABC transporter spans 2 to 230 (LKLTDITWLY…KASASALLGI (229 aa)). 32-39 (GPSGAGKS) serves as a coordination point for ATP.

It belongs to the ABC transporter superfamily. Thiamine importer (TC 3.A.1.19.1) family. The complex is composed of two ATP-binding proteins (ThiQ), two transmembrane proteins (ThiP) and a solute-binding protein (ThiB).

The protein resides in the cell inner membrane. It carries out the reaction thiamine(out) + ATP + H2O = thiamine(in) + ADP + phosphate + H(+). In terms of biological role, part of the ABC transporter complex ThiBPQ involved in thiamine import. Responsible for energy coupling to the transport system. The chain is Thiamine import ATP-binding protein ThiQ from Escherichia coli (strain K12).